The chain runs to 101 residues: Small ribosomal subunit protein uS14A (101 aa).

Positions 28-57 (KDIIRSPSSAPEQRSTAQRALARQPRDASP) are disordered. Polar residues predominate over residues 33–45 (SPSSAPEQRSTAQ).

It belongs to the universal ribosomal protein uS14 family. Part of the 30S ribosomal subunit. Contacts proteins S3 and S10.

Functionally, binds 16S rRNA, required for the assembly of 30S particles and may also be responsible for determining the conformation of the 16S rRNA at the A site. The sequence is that of Small ribosomal subunit protein uS14A from Mycobacterium bovis (strain ATCC BAA-935 / AF2122/97).